A 360-amino-acid polypeptide reads, in one-letter code: Photosystem II protein D1 (360 aa).

A run of 3 helical transmembrane segments spans residues 30-47 (YVGW…TAAA), 119-134 (HFLI…QWEL), and 143-157 (WICV…AAFA). Position 119 (His119) interacts with chlorophyll a. Tyr127 contacts pheophytin a. [CaMn4O5] cluster is bound by residues Asp171 and Glu190. The helical transmembrane segment at 198–219 (FHMAGVAGMFGGSLFSAMHGSL) threads the bilayer. Position 199 (His199) interacts with chlorophyll a. A quinone-binding positions include His216 and 265–266 (SF). His216 is a Fe cation binding site. Residue His273 participates in Fe cation binding. A helical membrane pass occupies residues 275 to 289 (FLAVFPVVCVWLTSM). [CaMn4O5] cluster contacts are provided by His333, Glu334, Asp343, and Ala345. Positions 346 to 360 (AAESTTVALSAPAIG) are excised as a propeptide.

The protein belongs to the reaction center PufL/M/PsbA/D family. In terms of assembly, PSII is composed of 1 copy each of membrane proteins PsbA, PsbB, PsbC, PsbD, PsbE, PsbF, PsbH, PsbI, PsbJ, PsbK, PsbL, PsbM, PsbT, PsbX, PsbY, Psb30/Ycf12, peripheral proteins PsbO, CyanoQ (PsbQ), PsbU, PsbV and a large number of cofactors. It forms dimeric complexes. The D1/D2 heterodimer binds P680, chlorophylls that are the primary electron donor of PSII, and subsequent electron acceptors. It shares a non-heme iron and each subunit binds pheophytin, quinone, additional chlorophylls, carotenoids and lipids. D1 provides most of the ligands for the Mn4-Ca-O5 cluster of the oxygen-evolving complex (OEC). There is also a Cl(-1) ion associated with D1 and D2, which is required for oxygen evolution. The PSII complex binds additional chlorophylls, carotenoids and specific lipids. serves as cofactor. Tyr-162 forms a radical intermediate that is referred to as redox-active TyrZ, YZ or Y-Z. Post-translationally, C-terminally processed by CtpA; processing is essential to allow assembly of the oxygen-evolving complex and thus photosynthetic growth.

It is found in the cellular thylakoid membrane. The catalysed reaction is 2 a plastoquinone + 4 hnu + 2 H2O = 2 a plastoquinol + O2. Its function is as follows. Photosystem II (PSII) is a light-driven water:plastoquinone oxidoreductase that uses light energy to abstract electrons from H(2)O, generating O(2) and a proton gradient subsequently used for ATP formation. It consists of a core antenna complex that captures photons, and an electron transfer chain that converts photonic excitation into a charge separation. The D1/D2 (PsbA/PsbD) reaction center heterodimer binds P680, the primary electron donor of PSII as well as several subsequent electron acceptors. In Prochlorococcus marinus (strain MIT 9301), this protein is Photosystem II protein D1.